The primary structure comprises 727 residues: Capsid protein VP1 (727 aa).

Residues 1-10 are compositionally biased toward basic residues; the sequence is MAPPAKRARR. Disordered stretches follow at residues 1-38 and 95-184; these read MAPP…SDAA and VLTD…VGIS. The Nuclear localization signal motif lies at 4-13; sequence PAKRARRGLV. A phospholipase A2-like region spans residues 19–64; sequence YLGPGNSLDQGEPTNPSDAAAKEHDEAYAAYLRSGKNPYLYFSPAD. Residues 25–35 show a composition bias toward polar residues; it reads SLDQGEPTNPS. Positions 166–183 are enriched in gly residues; that stretch reads SGNGSGGGGGGGSGGVGI. Asparagine 323 lines the Mg(2+) pocket. Residues 507–536 are disordered; that stretch reads AQTDENQAADGDPRYAFGRQHGQKTTTTGE. Cysteine 633 and cysteine 637 are disulfide-bonded.

This sequence belongs to the parvoviridae capsid protein family. In terms of assembly, interacts with host TFRC.

The protein resides in the virion. Its subcellular location is the host nucleus. Capsid protein self-assembles to form an icosahedral capsid with a T=1 symmetry, about 22 nm in diameter, and consisting of 60 copies of two size variants of the capsid proteins, VP1 and VP2, which differ by the presence of an N-terminal extension in the minor protein VP1. The capsid encapsulates the genomic ssDNA. Capsid proteins are responsible for the attachment to host cell receptor TFRC. This attachment induces virion internalization predominantly through clathrin-dependent endocytosis. Binding to the host receptors also induces capsid rearrangements leading to surface exposure of VP1 N-terminus. In Feline panleukopenia virus (FPV), this protein is Capsid protein VP1.